Reading from the N-terminus, the 532-residue chain is Cytochrome P450 monooxygenase pgmC (532 aa).

The chain crosses the membrane as a helical span at residues 15-32; it reads ISTLAVLIGFIALLTAWL. Residue C438 participates in heme binding.

This sequence belongs to the cytochrome P450 family. Heme serves as cofactor.

Its subcellular location is the membrane. It functions in the pathway pigment biosynthesis. The protein operates within secondary metabolite biosynthesis. In terms of biological role, cytochrome P450 monooxygenase; part of the gene cluster that mediates the biosynthesis of pleosporalin A, ascomycone A, as well as a third cryptic naphthoquinone derived pigment, all responsible for the coloration of conidia. Involved in the oxidation of fusarubinaldehyde at C-9. PgmC has low substrate-specificity and is also able to use the pgmA product 3-acetonyl-1,6,8-trihydroxy-2-naphthaldehyde as a substrate. The pathway begins with the biosynthesis of the cyclized heptaketide 3-acetonyl-1,6,8-trihydroxy-2-naphthaldehyde by the NR-PKS pgmA. The C-6 hydroxyl group is further methylated by the O-methyltransferase pgmB to yield fusarubinaldehyde which is in turn oxidized by the cytochrome P450 monooxygenase pgmC at C-9. The C-1 hydroxyl group is then methylated spontaneously. Although pgmE, pgmD and pgmH are essential for the production of pleosporalin A, it is not the case for the 2 other final products and it remains difficult to assign a specific function to each enzyme. PgmF and pgmG seem not to be involved in pigment biosynthesis although they were regulated by the cluster-specific transcription factor pgmR. The polypeptide is Cytochrome P450 monooxygenase pgmC (Aspergillus terreus (strain NIH 2624 / FGSC A1156)).